A 327-amino-acid polypeptide reads, in one-letter code: MREVLLSECIDLLYESHFVISKPFGRSCFDLIAKKADLRFLIKILKNIDSLSTEQSEELLNIAKMLQAVPIIIGTRTRNSVMEEGAVYERYGIKAITFNTFRDQLSGEPPVVYANRGGFFVNIDGAVLRETREKLKISVGELAEISRVSRKTIYKYEQNEANPSAEVAIKIEEYLDVPLIKGINIVDYMEGLKSQKSREEAFEKILKEGEDFKIRVIDILGDMGFNLLETTKAPFDAVAEESKIEDSENQNIIFTNIQETENEEIRRKAMIVDEISKMLNSHSLLVLEKKTNENKRITSMSISELEKIGDTVDLLEFIEKRKKSKEI.

One can recognise an HTH cro/C1-type domain in the interval 128-183 (LRETREKLKISVGELAEISRVSRKTIYKYEQNEANPSAEVAIKIEEYLDVPLIKGI). The H-T-H motif DNA-binding region spans 139–158 (VGELAEISRVSRKTIYKYEQ).

The polypeptide is Putative HTH-type transcriptional regulatory protein MmarC6_0210 (Methanococcus maripaludis (strain C6 / ATCC BAA-1332)).